The primary structure comprises 195 residues: Probable septum site-determining protein MinC (195 aa).

The protein belongs to the MinC family. In terms of assembly, interacts with MinD and FtsZ.

Cell division inhibitor that blocks the formation of polar Z ring septums. Rapidly oscillates between the poles of the cell to destabilize FtsZ filaments that have formed before they mature into polar Z rings. Prevents FtsZ polymerization. The sequence is that of Probable septum site-determining protein MinC from Helicobacter pylori (strain G27).